The chain runs to 2046 residues: Protein TIC 214 (2046 aa).

6 consecutive transmembrane segments (helical) span residues 18-38 (VSGP…LPFG), 54-74 (LYGI…FLSM), 79-99 (IYAA…YTFC), 125-145 (ILSL…LLAN), 163-183 (ISFM…FINL), and 214-234 (TFSV…PLIF). 3 disordered regions span residues 278–299 (DEDR…EDRS), 320–472 (ARSV…VPRE), and 1833–1898 (AKDS…EDEI). 3 stretches are compositionally biased toward basic and acidic residues: residues 322–335 (SVAE…EHRS), 344–368 (SVAE…RSVA), and 378–457 (AKKD…RSVA). Over residues 1833–1866 (AKDSNANDINAKDSNANDINANDSNAKDSNANDI) the composition is skewed to low complexity. The segment covering 1882–1898 (NAKDSNADVPKKKEDEI) has biased composition (basic and acidic residues).

Belongs to the TIC214 family. In terms of assembly, part of the Tic complex.

Its subcellular location is the plastid. It localises to the chloroplast inner membrane. In terms of biological role, involved in protein precursor import into chloroplasts. May be part of an intermediate translocation complex acting as a protein-conducting channel at the inner envelope. The chain is Protein TIC 214 from Pinus koraiensis (Korean pine).